Reading from the N-terminus, the 321-residue chain is Peptide transport system permease protein SapB (321 aa).

8 consecutive transmembrane segments (helical) span residues 8–28 (HILW…VILL), 41–61 (IYIG…GITY), 82–102 (CFIT…ISAV), 117–137 (YVGL…VAAL), 150–170 (LLYE…FMEV), 180–200 (ILQH…MEII), 249–269 (VFTL…WPGI), and 289–309 (VIVI…FTFI). An ABC transmembrane type-1 domain is found at 75 to 303 (LPPTLELCFI…VCIILIDTFT (229 aa)).

This sequence belongs to the binding-protein-dependent transport system permease family. OppBC subfamily.

The protein localises to the cell inner membrane. Its function is as follows. Involved in a peptide intake transport system that plays a role in the resistance to antimicrobial peptides. The chain is Peptide transport system permease protein SapB (sapB) from Haemophilus influenzae (strain ATCC 51907 / DSM 11121 / KW20 / Rd).